Consider the following 236-residue polypeptide: 7-cyano-7-deazaguanine synthase (236 aa).

7-17 (CSGGLDSVSLA) is an ATP binding site. Zn(2+) is bound by residues Cys185, Cys193, Cys196, and Cys199.

This sequence belongs to the QueC family. It depends on Zn(2+) as a cofactor.

It carries out the reaction 7-carboxy-7-deazaguanine + NH4(+) + ATP = 7-cyano-7-deazaguanine + ADP + phosphate + H2O + H(+). It functions in the pathway purine metabolism; 7-cyano-7-deazaguanine biosynthesis. Catalyzes the ATP-dependent conversion of 7-carboxy-7-deazaguanine (CDG) to 7-cyano-7-deazaguanine (preQ(0)). This chain is 7-cyano-7-deazaguanine synthase, found in Rhizobium leguminosarum bv. trifolii (strain WSM2304).